A 794-amino-acid polypeptide reads, in one-letter code: MQVRVRLLLLLCAVLLGSAAASSDEETNQDESLDSKGALPTDGSVKDHTTGKVVLLARDLLILKDSEVESLLQDEEESSKSQEEVSVTEDISFLDSPNPSSKTYEELKRVRKPVLTAIEGTAHGEPCHFPFLFLDKEYDECTSDGREDGRLWCATTYDYKTDEKWGFCETEEDAAKRRQMQEAEAIYQSGMKILNGSTRKNQKREAYRYLQKAAGMNHTKALERVSYALLFGDYLTQNIQAAKEMFEKLTEEGSPKGQTGLGFLYASGLGVNSSQAKALVYYTFGALGGNLIAHMVLGYRYWAGIGVLQSCESALTHYRLVANHVASDISLTGGSVVQRIRLPDEVENPGMNSGMLEEDLIQYYQFLAEKGDVQAQVGLGQLHLHGGRGVEQNHQRAFDYFNLAANAGNSHAMAFLGKMYSEGSDIVPQSNETALHYFKKAADMGNPVGQSGLGMAYLYGRGVQVNYDLALKYFQKAAEQGWVDGQLQLGSMYYNGIGVKRDYKQALKYFNLASQGGHILAFYNLAQMHASGTGVMRSCHTAVELFKNVCERGRWSERLMTAYNSYKDDDYNAAVVQYLLLAEQGYEVAQSNAAFILDQREATIVGENETYPRALLHWNRAASQGYTVARIKLGDYHFYGFGTDVDYETAFIHYRLASEQQHSAQAMFNLGYMHEKGLGIKQDIHLAKRFYDMAAEASPDAQVPVFLALCKLGVVYFLQYIREANIRDLFTQLDMDQLLGPEWDLYLMTIIALLLGTVIAYRQRQHQDIPVPRPPGPRPAPPQQEGPPEQQPPQ.

The first 21 residues, 1–21 (MQVRVRLLLLLCAVLLGSAAA), serve as a signal peptide directing secretion. The interaction with ERLEC1, OS9 and SYVN1 stretch occupies residues 22 to 737 (SSDEETNQDE…DLFTQLDMDQ (716 aa)). At 22–738 (SSDEETNQDE…LFTQLDMDQL (717 aa)) the chain is on the lumenal side. The span at 23–32 (SDEETNQDES) shows a compositional bias: acidic residues. Disordered stretches follow at residues 23–46 (SDEE…GSVK) and 73–105 (QDEE…KTYE). Residues 122–170 (AHGEPCHFPFLFLDKEYDECTSDGREDGRLWCATTYDYKTDEKWGFCET) enclose the Fibronectin type-II domain. Cystine bridges form between Cys-127–Cys-153 and Cys-141–Cys-168. Sel1-like repeat units follow at residues 183–218 (AEAI…GMNH), 219–254 (TKAL…EEGS), 255–290 (PKGQ…LGGN), 291–326 (LIAH…NHVA), 373–409 (VQAQ…NAGN), 410–446 (SHAM…DMGN), 447–482 (PVGQ…EQGW), 483–518 (VDGQ…QGGH), and 519–554 (ILAF…ERGR). N-linked (GlcNAc...) asparagine glycans are attached at residues Asn-195 and Asn-217. N-linked (GlcNAc...) asparagine glycosylation occurs at Asn-272. The segment at 352–537 (NSGMLEEDLI…MHASGTGVMR (186 aa)) is important for homodimerization and oligomerization. N-linked (GlcNAc...) asparagine glycosylation occurs at Asn-431. N-linked (GlcNAc...) asparagine glycosylation occurs at Asn-608. Sel1-like repeat units lie at residues 627 to 662 (TVAR…EQQH) and 664 to 699 (AQAM…EASP). Positions 643 to 723 (TDVDYETAFI…VVYFLQYIRE (81 aa)) are interaction with SYVN1. The tract at residues 738–794 (LLGPEWDLYLMTIIALLLGTVIAYRQRQHQDIPVPRPPGPRPAPPQQEGPPEQQPPQ) is mediates retention in the endoplasmic reticulum. The helical transmembrane segment at 739 to 759 (LGPEWDLYLMTIIALLLGTVI) threads the bilayer. The Cytoplasmic portion of the chain corresponds to 760 to 794 (AYRQRQHQDIPVPRPPGPRPAPPQQEGPPEQQPPQ). Positions 767 to 794 (QDIPVPRPPGPRPAPPQQEGPPEQQPPQ) are disordered. Residues 771 to 794 (VPRPPGPRPAPPQQEGPPEQQPPQ) show a composition bias toward pro residues.

This sequence belongs to the sel-1 family. As to quaternary structure, homodimer and homooligomer. May form a complex with ERLEC1, HSPA5, OS9, and SYVN1. Interacts with FOXRED2 and EDEM1. Interacts with LPL and LMF1; may stabilize the complex formed by LPL and LMF1 and thereby promote the export of LPL dimers. Component of the HRD1 complex, which comprises at least SYNV1/HRD1, DERL1/2, FAM8A1, HERPUD1/HERP, OS9, SEL1L and UBE2J1. SYNV1 assembles with SEL1L and FAM8A1 through its transmembrane domains, but interaction with its cytoplasmic domain is required to confer stability to FAM8A1 and enhance recruitment of HERPUD1. The interaction with SYNV1/HRD1 is direct. N-glycosylated.

Its subcellular location is the endoplasmic reticulum membrane. In terms of biological role, plays a role in the endoplasmic reticulum quality control (ERQC) system also called ER-associated degradation (ERAD) involved in ubiquitin-dependent degradation of misfolded endoplasmic reticulum proteins. Enhances SYVN1 stability. Plays a role in LPL maturation and secretion. Required for normal differentiation of the pancreas epithelium, and for normal exocrine function and survival of pancreatic cells. May play a role in Notch signaling. The sequence is that of Protein sel-1 homolog 1 (Sel1l) from Rattus norvegicus (Rat).